The chain runs to 205 residues: MAEASSANLGSGCEEKRHEGSSSESVPPGTTISRVKLLDTMVDTFLQKLVAAGSYQRFTDCYKCFYQLQPAMTQQIYDKFIAQLQTSIREEISDIKEEGNLEAVLNALDKIVEEGKVRKEPAWRPSGIPEKDLHSVMAPYFLQQRDTLRRHVQKQEAENQQLADAVLAGRRQVEELQLQVQAQQQAWQALHREQRELVAVLREPE.

Positions 1–30 are disordered; sequence MAEASSANLGSGCEEKRHEGSSSESVPPGT. A coiled-coil region spans residues 141 to 193; it reads FLQQRDTLRRHVQKQEAENQQLADAVLAGRRQVEELQLQVQAQQQAWQALHRE.

As to quaternary structure, component of the MIS12 complex composed of MIS12, DSN1, NSL1 and PMF1. Interacts with COPS7A. Interacts via its coiled-coil domain with the leucine-zipper domain of NFE2L2. The interaction with NFE2L2 is required for the transcriptional regulation of SSAT. As to expression, highest levels of expression in heart and skeletal muscle, with significant levels expressed in kidney and liver.

Its subcellular location is the nucleus. It is found in the chromosome. The protein localises to the centromere. The protein resides in the kinetochore. In terms of biological role, part of the MIS12 complex which is required for normal chromosome alignment and segregation and kinetochore formation during mitosis. May act as a cotranscription partner of NFE2L2 involved in regulation of polyamine-induced transcription of SSAT. This chain is Polyamine-modulated factor 1, found in Homo sapiens (Human).